A 392-amino-acid chain; its full sequence is Chalcone synthase 1 (392 aa).

The active site involves Cys167.

Belongs to the thiolase-like superfamily. Chalcone/stilbene synthases family.

The enzyme catalyses (E)-4-coumaroyl-CoA + 3 malonyl-CoA + 3 H(+) = 2',4,4',6'-tetrahydroxychalcone + 3 CO2 + 4 CoA. The protein operates within secondary metabolite biosynthesis; flavonoid biosynthesis. The primary product of this enzyme is 4,2',4',6'-tetrahydroxychalcone (also termed naringenin-chalcone or chalcone) which can under specific conditions spontaneously isomerize into naringenin. This Secale cereale (Rye) protein is Chalcone synthase 1 (CHS1).